The following is a 1386-amino-acid chain: MLRYLLKTLLQMNLFADSLAGDISNSSELLLGFNSSLAALNHTLLPPGDPSLNGSRVGPEDAMPRIVEQPPDLLVSRGEPATLPCRAEGRPRPNIEWYKNGARVATVREDPRAHRLLLPSGALFFPRIVHGRRARPDEGVYTCVARNYLGAAASRNASLEVAVLRDDFRQSPGNVVVAVGEPAVLECVPPRGHPEPSVSWRKDGARLKEEEGRITIRGGKLMMSHTLKSDAGMYVCVASNMAGERESAAAEVMVLERPSFLRRPVNQVVLADAPVTFLCEVKGDPPPRLRWRKEDGELPTGRYEIRSDHSLWIGHVSAEDEGTYTCVAENSVGRAEASGSLSVHVPPQLVTQPQDQMAAPGESVAFQCETKGNPPPAIFWQKEGSQVLLFPSQSLQPTGRFSVSPRGQLNITAVQRGDAGYYVCQAVSVAGSILAKALLEIKGASLDGLPPVILQGPANQTLVLGSSVWLPCRVTGNPQPSVRWKKDGQWLQGDDLQFKTMANGTLYIANVQEMDMGFYSCVAKSSTGEATWSGWLKMREDWGVSPDPPTEPSSPPGAPSQPVVTEITKNSITLTWKPNPQTGAAVTSYVIEAFSPAAGNTWRTVADGVQLETHTVSGLQPNTIYLFLVRAVGAWGLSEPSPVSEPVRTQDSSPSRPVEDPWRGQQGLAEVAVRLQEPIVLGPRTLQVSWTVDGPVQLVQGFRVSWRVAGPEGGSWTMLDLQSPSQQSTVLRGLPPGTQIQIKVQAQGQEGLGAESLSVTRSIPEEAPSGPPQGVAVALGGDGNSSITVSWEPPLPSQQNGVITEYQIWCLGNESRFHLNRSAAGWARSAMLRGLVPGLLYRTLVAAATSAGVGVPSAPVLVQLPSPPDLEPGLEVGAGLAVRLARVLREPAFLAGSGAACGALLLGLCAALYWRRKQRKELSHYTASFAYTPAVSFPHSEGLSGASSRPPMGLGPAPYSWLADSWPHPSRSPSAQEPRGSCCPSNPDPDDRYYNEAGISLYLAQTARGTAAPGEGPVYSTIDPAGEELQTFHGGFPQHPSGDLGPWSQYAPPEWSQGDSGAKGGKVKLLGKPVQMPSLNWPEALPPPPPSCELSCLEGPEEELEGSSEPEEWCPPMPERSHLTEPSSSGGCLVTPSRRETPSPTPSYGQQSTATLTPSPPDPPQPPTDMPHLHQMPRRVPLGPSSPLSVSQPMLGIREARPAGLGAGPAASPHLSPSPAPSTASSAPGRTWQGNGEMTPPLQGPRARFRKKPKALPYRRENSPGDLPPPPLPPPEEEASWALELRAAGSMSSLERERSGERKAVQAVPLAAQRVLHPDEEAWLPYSRPSFLSRGQGTSTCSTAGSNSSRGSSSSRGSRGPGRSRSRSQSRSQSQRPGQKRREEPR.

A signal peptide spans 1–20; it reads MLRYLLKTLLQMNLFADSLA. At 21 to 891 the chain is on the extracellular side; it reads GDISNSSELL…VRLARVLREP (871 aa). Asn25, Asn34, Asn41, and Asn53 each carry an N-linked (GlcNAc...) asparagine glycan. Ig-like C2-type domains lie at 64-160, 166-253, 258-342, 347-440, and 450-531; these read PRIV…ASLE, DDFR…AEVM, PSFL…GSLS, PQLV…ALLE, and PPVI…GEAT. A disulfide bridge connects residues Cys85 and Cys143. Residue Asn156 is glycosylated (N-linked (GlcNAc...) asparagine). Cystine bridges form between Cys187-Cys236, Cys279-Cys326, and Cys368-Cys424. Residues Asn410, Asn459, and Asn503 are each glycosylated (N-linked (GlcNAc...) asparagine). Cys472 and Cys521 form a disulfide bridge. Disordered regions lie at residues 541–563 and 639–662; these read DWGV…SQPV and EPSP…EDPW. The span at 546–559 shows a compositional bias: pro residues; that stretch reads PDPPTEPSSPPGAP. Fibronectin type-III domains lie at 558-652, 671-766, and 771-869; these read APSQ…TQDS, VAVR…IPEE, and PPQG…SPPD. N-linked (GlcNAc...) asparagine glycosylation is found at Asn784, Asn813, and Asn820. A helical membrane pass occupies residues 892–912; sequence AFLAGSGAACGALLLGLCAAL. Over 913 to 1386 the chain is Cytoplasmic; it reads YWRRKQRKEL…PGQKRREEPR (474 aa). Disordered stretches follow at residues 965–989, 1028–1310, and 1327–1386; these read SWPH…NPDP, ELQT…AVPL, and SRPS…EEPR. Positions 1067-1083 are enriched in low complexity; the sequence is VKLLGKPVQMPSLNWPE. The span at 1099 to 1112 shows a compositional bias: acidic residues; sequence GPEEELEGSSEPEE. The span at 1158–1169 shows a compositional bias: pro residues; sequence PSPPDPPQPPTD. 2 stretches are compositionally biased toward low complexity: residues 1178 to 1191 and 1202 to 1229; these read RRVP…LSVS and PAGL…SAPG. At Ser1263 the chain carries Phosphoserine. A compositionally biased stretch (basic and acidic residues) spans 1294–1304; sequence LERERSGERKA. The span at 1333–1344 shows a compositional bias: polar residues; the sequence is SRGQGTSTCSTA. The segment covering 1345-1361 has biased composition (low complexity); sequence GSNSSRGSSSSRGSRGP.

This sequence belongs to the immunoglobulin superfamily. ROBO family. In terms of assembly, monomer. Interacts (via Fibronectin type-III 1 domain) with NELL2 (via the EGF domains) with a 3:3 stoichiometry; this interaction promotes oligomerization of ROBO3 resulting in the repulsion of commissural axons in the midline.

Its subcellular location is the membrane. Functionally, receptor involved in axon guidance during development. Acts as a multifunctional regulator of pathfinding that simultaneously mediates NELL2 repulsion, inhibits SLIT repulsion, and facilitates Netrin-1/NTN1 attraction. In spinal cord development plays a role in guiding commissural axons probably by preventing premature sensitivity to Slit proteins thus inhibiting Slit signaling through ROBO1/ROBO2. Binding OF NELL2 to the receptor ROBO3 promotes oligomerization of ROBO3, resulting in the repulsion of commissural axons in the midline. ROBO3 also indirectly boosts axon attraction to NTN1 without interacting with NTN1 itself. The protein is Roundabout homolog 3 of Homo sapiens (Human).